Reading from the N-terminus, the 969-residue chain is Putative zinc protease mug138 (969 aa).

Zn(2+) is bound at residue histidine 68. Catalysis depends on glutamate 71, which acts as the Proton acceptor. Residues histidine 72 and glutamate 149 each coordinate Zn(2+).

It belongs to the peptidase M16 family.

It localises to the cytoplasm. Has a role in meiosis. This Schizosaccharomyces pombe (strain 972 / ATCC 24843) (Fission yeast) protein is Putative zinc protease mug138 (mug138).